An 86-amino-acid polypeptide reads, in one-letter code: Small ribosomal subunit protein bS16 (86 aa).

It belongs to the bacterial ribosomal protein bS16 family.

The chain is Small ribosomal subunit protein bS16 from Borreliella afzelii (strain PKo) (Borrelia afzelii).